A 131-amino-acid polypeptide reads, in one-letter code: uncharacterized protein (131 aa).

In terms of domain architecture, HTH hxlR-type spans 26-124 (CSVEVAVNEI…WGKMYGSHQE (99 aa)).

This is an uncharacterized protein from Methanothermobacter thermautotrophicus (strain ATCC 29096 / DSM 1053 / JCM 10044 / NBRC 100330 / Delta H) (Methanobacterium thermoautotrophicum).